A 337-amino-acid polypeptide reads, in one-letter code: tRNA N6-adenosine threonylcarbamoyltransferase (337 aa).

Histidine 111 and histidine 115 together coordinate Fe cation. Residues 134–138 (LVSGG), aspartate 167, glycine 180, and asparagine 272 each bind substrate. Fe cation is bound at residue aspartate 300.

The protein belongs to the KAE1 / TsaD family. Requires Fe(2+) as cofactor.

It is found in the cytoplasm. It catalyses the reaction L-threonylcarbamoyladenylate + adenosine(37) in tRNA = N(6)-L-threonylcarbamoyladenosine(37) in tRNA + AMP + H(+). Required for the formation of a threonylcarbamoyl group on adenosine at position 37 (t(6)A37) in tRNAs that read codons beginning with adenine. Is involved in the transfer of the threonylcarbamoyl moiety of threonylcarbamoyl-AMP (TC-AMP) to the N6 group of A37, together with TsaE and TsaB. TsaD likely plays a direct catalytic role in this reaction. This Salmonella typhi protein is tRNA N6-adenosine threonylcarbamoyltransferase.